The sequence spans 184 residues: Adenine phosphoribosyltransferase (184 aa).

This sequence belongs to the purine/pyrimidine phosphoribosyltransferase family. As to quaternary structure, homodimer.

It localises to the cytoplasm. The enzyme catalyses AMP + diphosphate = 5-phospho-alpha-D-ribose 1-diphosphate + adenine. Its pathway is purine metabolism; AMP biosynthesis via salvage pathway; AMP from adenine: step 1/1. Its function is as follows. Catalyzes a salvage reaction resulting in the formation of AMP, that is energically less costly than de novo synthesis. The polypeptide is Adenine phosphoribosyltransferase (Paracidovorax citrulli (strain AAC00-1) (Acidovorax citrulli)).